Reading from the N-terminus, the 247-residue chain is Cell division protein ZapD (247 aa).

It belongs to the ZapD family. In terms of assembly, interacts with FtsZ.

The protein resides in the cytoplasm. Functionally, cell division factor that enhances FtsZ-ring assembly. Directly interacts with FtsZ and promotes bundling of FtsZ protofilaments, with a reduction in FtsZ GTPase activity. In Enterobacter sp. (strain 638), this protein is Cell division protein ZapD.